The primary structure comprises 180 residues: MMKHDIEKVLISEEEIQKKVKELGAELTSEYQDTFPLAIGVLKGALPFMADLIKHIDTYLEMDFMDVSSYGNSTVSSGEVKIIKDLDTSVEGRDILIIEDIIDSGLTLSYLVELFRYRKAKSIKIVTLLDKPSGRKADIKADFVGFEVPDAFVVGYGLDYAERYRNLPYIGVLKPAVYES.

Diphosphate-binding residues include lysine 43 and glycine 44. Positions 99 and 100 each coordinate Mg(2+). Residue aspartate 103 is the Proton acceptor of the active site. GMP contacts are provided by residues lysine 131, 152 to 153 (FV), and aspartate 159. Arginine 165 is a diphosphate binding site.

It belongs to the purine/pyrimidine phosphoribosyltransferase family. Requires Mg(2+) as cofactor.

It is found in the cytoplasm. The enzyme catalyses IMP + diphosphate = hypoxanthine + 5-phospho-alpha-D-ribose 1-diphosphate. It catalyses the reaction GMP + diphosphate = guanine + 5-phospho-alpha-D-ribose 1-diphosphate. It participates in purine metabolism; IMP biosynthesis via salvage pathway; IMP from hypoxanthine: step 1/1. Its pathway is purine metabolism; GMP biosynthesis via salvage pathway; GMP from guanine: step 1/1. Its function is as follows. Purine salvage pathway enzyme that catalyzes the transfer of the ribosyl-5-phosphate group from 5-phospho-alpha-D-ribose 1-diphosphate (PRPP) to the N9 position of the 6-oxopurines hypoxanthine and guanine to form the corresponding ribonucleotides IMP (inosine 5'-monophosphate) and GMP (guanosine 5'-monophosphate), with the release of PPi. The polypeptide is Hypoxanthine-guanine phosphoribosyltransferase (hprT) (Bacillus subtilis (strain 168)).